The following is a 70-amino-acid chain: ATP synthase subunit c (70 aa).

2 consecutive transmembrane segments (helical) span residues 4 to 24 (IAAAIAIGLGALGAGIGNGLI) and 45 to 65 (LMFIGVALVEALPIIAVVIAF).

The protein belongs to the ATPase C chain family. As to quaternary structure, F-type ATPases have 2 components, F(1) - the catalytic core - and F(0) - the membrane proton channel. F(1) has five subunits: alpha(3), beta(3), gamma(1), delta(1), epsilon(1). F(0) has three main subunits: a(1), b(2) and c(10-14). The alpha and beta chains form an alternating ring which encloses part of the gamma chain. F(1) is attached to F(0) by a central stalk formed by the gamma and epsilon chains, while a peripheral stalk is formed by the delta and b chains.

It is found in the cell membrane. Its function is as follows. F(1)F(0) ATP synthase produces ATP from ADP in the presence of a proton or sodium gradient. F-type ATPases consist of two structural domains, F(1) containing the extramembraneous catalytic core and F(0) containing the membrane proton channel, linked together by a central stalk and a peripheral stalk. During catalysis, ATP synthesis in the catalytic domain of F(1) is coupled via a rotary mechanism of the central stalk subunits to proton translocation. This Bacillus pumilus (strain SAFR-032) protein is ATP synthase subunit c.